Reading from the N-terminus, the 362-residue chain is Protein mom-2 (362 aa).

Positions 1–24 are cleaved as a signal peptide; the sequence is MHINTPVLLAIIYFLVFAPKSADA. 5 disulfides stabilise this stretch: Cys-80/Cys-91, Cys-129/Cys-137, Cys-139/Cys-167, Cys-217/Cys-231, and Cys-219/Cys-226. An N-linked (GlcNAc...) asparagine glycan is attached at Asn-90. The O-palmitoleoyl serine; by mom-1 moiety is linked to residue Ser-223. The tract at residues 263–282 is disordered; it reads TVRSSPSAGSSGRSERFARN. The span at 265-274 shows a compositional bias: low complexity; sequence RSSPSAGSSG. Intrachain disulfides connect Cys-304-Cys-322, Cys-313-Cys-317, Cys-321-Cys-361, Cys-337-Cys-352, Cys-339-Cys-349, and Cys-344-Cys-345.

This sequence belongs to the Wnt family. Palmitoleoylation is required for efficient binding to frizzled receptors. Depalmitoleoylation leads to Wnt signaling pathway inhibition. In terms of tissue distribution, expressed by anchor cell and vulva precursor cell descendants P5.ppa, P5.ppp, P7.paa and P7.pap. Expressed in the tail and weakly expressed in the vulva and body wall muscles.

It localises to the secreted. The protein localises to the extracellular space. The protein resides in the extracellular matrix. Functionally, ligand for members of the frizzled family of seven transmembrane receptors. Required in embryonic development for endoderm specification and the correct positioning and orientation of the mitotic spindles and division planes in blastomere cells. Involved in cleavage axis determination. Binds to receptor tyrosine kinase cam-1. Together with wnt ligand lin-44, plays a role in controlling vulva precursor cell P7.p lineage orientation during vulva development, probably by acting as a ligand for tyrosine kinase receptor lin-18. May act redundantly with other Wnt ligands such as cwn-1 and cwn-2 to control seam cell polarity. This chain is Protein mom-2 (mom-2), found in Caenorhabditis elegans.